The sequence spans 459 residues: Putative metabolite transport protein YdjK (459 aa).

Residues 1-25 (MEQITKPHCGARLDRLPDCRWHSSM) lie on the Cytoplasmic side of the membrane. A helical membrane pass occupies residues 26–46 (FAIVAFGLLVCWSNAVGGLIL). At 47-60 (AQLKALGWTDNSTT) the chain is on the periplasmic side. A helical membrane pass occupies residues 61–81 (ATFSAITTAGMFLGALVGGII). The Cytoplasmic portion of the chain corresponds to 82–90 (GDKTGRRNA). A helical membrane pass occupies residues 91–111 (FILYEAIHIASMVVGAFSPNM). Residue Asp112 is a topological domain, periplasmic. A helical transmembrane segment spans residues 113 to 133 (FLIACRFVMGVGLGALLVTLF). Residues 134–153 (AGFTEYMPGRNRGTWSSRVS) lie on the Cytoplasmic side of the membrane. A helical membrane pass occupies residues 154–174 (FIGNWSYPLCSLIAMGLTPLI). Residues 175–181 (SAEWNWR) are Periplasmic-facing. The chain crosses the membrane as a helical span at residues 182-202 (VQLLIPAILSLIATALAWRYF). Topologically, residues 203–271 (PESPRWLESR…LLKRVILGSC (69 aa)) are cytoplasmic. The chain crosses the membrane as a helical span at residues 272–292 (VLIAMNVVQYTLINWLPTIFM). Residues 293-301 (TQGINLKDS) are Periplasmic-facing. Residues 302–322 (IVLNTMSMFGAPFGIFIAMLV) form a helical membrane-spanning segment. Topologically, residues 323-329 (MDKIPRK) are cytoplasmic. The chain crosses the membrane as a helical span at residues 330-350 (TMGVGLLILIAVLGYIYSLQT). Ser351 is a topological domain (periplasmic). Residues 352–372 (MLLITLIGFFLITFVYMYVCY) traverse the membrane as a helical segment. Over 373–399 (ASAVYVPEIWPTEAKLRGSGLANAVGR) the chain is Cytoplasmic. Helical transmembrane passes span 400–420 (ISGIAAPYAVAVLLSSYGVTG) and 421–441 (VFILLGAVSIIVAIAIATIGI). Residues 442–459 (ETKGVSVESLSIDAVANK) are Cytoplasmic-facing.

It belongs to the major facilitator superfamily. Sugar transporter (TC 2.A.1.1) family.

It localises to the cell inner membrane. The polypeptide is Putative metabolite transport protein YdjK (ydjK) (Escherichia coli (strain K12)).